The chain runs to 745 residues: 5-methyltetrahydropteroyltriglutamate--homocysteine methyltransferase (745 aa).

5-methyltetrahydropteroyltri-L-glutamate contacts are provided by residues R19–K22 and K119. L-homocysteine-binding positions include I418–S420 and E471. L-methionine contacts are provided by residues I418–S420 and E471. Residues R502–C503 and W548 contribute to the 5-methyltetrahydropteroyltri-L-glutamate site. D586 contributes to the L-homocysteine binding site. L-methionine is bound at residue D586. 5-methyltetrahydropteroyltri-L-glutamate is bound at residue E592. Zn(2+) is bound by residues H628, C630, and E652. The active-site Proton donor is H681. Residue C713 coordinates Zn(2+).

It belongs to the vitamin-B12 independent methionine synthase family. Zn(2+) is required as a cofactor.

It carries out the reaction 5-methyltetrahydropteroyltri-L-glutamate + L-homocysteine = tetrahydropteroyltri-L-glutamate + L-methionine. It participates in amino-acid biosynthesis; L-methionine biosynthesis via de novo pathway; L-methionine from L-homocysteine (MetE route): step 1/1. Functionally, catalyzes the transfer of a methyl group from 5-methyltetrahydrofolate to homocysteine resulting in methionine formation. This Corynebacterium glutamicum (strain R) protein is 5-methyltetrahydropteroyltriglutamate--homocysteine methyltransferase.